Consider the following 390-residue polypeptide: Trehalose-phosphate phosphatase (390 aa).

The Nucleophile role is filled by Asp150. Mg(2+) is bound by residues Asp150, Asp152, and Asp333. 150-152 (DFD) is a binding site for substrate.

The protein belongs to the trehalose phosphatase family. Mg(2+) is required as a cofactor.

The catalysed reaction is alpha,alpha-trehalose 6-phosphate + H2O = alpha,alpha-trehalose + phosphate. The protein operates within glycan biosynthesis; trehalose biosynthesis. Removes the phosphate from trehalose 6-phosphate to produce free trehalose. This Mycobacterium marinum (strain ATCC BAA-535 / M) protein is Trehalose-phosphate phosphatase (otsB).